Reading from the N-terminus, the 319-residue chain is FAD-dependent oxidoreductase FVFD30 (319 aa).

Positions 6, 18, and 25 each coordinate FAD. Residues K129 and G188 each contribute to the NAD(+) site. NADP(+)-binding residues include K129 and G188. FAD is bound by residues D228 and Y265. A 6-hydroxy-FAD-binding site is contributed by D228. Residue Y265 participates in NAD(+) binding. Y265 provides a ligand contact to NADP(+). Residues 281 to 301 (GVGYFGVWWGIVIGGWLASLL) form a helical membrane-spanning segment.

It belongs to the FAD-dependent oxidoreductase family.

It localises to the membrane. Its function is as follows. Probable FAD-dependent oxidoreductase that plays a role in the regulation of fruiting body development. This is FAD-dependent oxidoreductase FVFD30 from Flammulina velutipes (Agaricus velutipes).